Here is a 162-residue protein sequence, read N- to C-terminus: Regulator of ribonuclease activity A (162 aa).

Belongs to the RraA family. Homotrimer. Binds to both RNA-binding sites in the C-terminal region of Rne and to RhlB.

The protein resides in the cytoplasm. In terms of biological role, globally modulates RNA abundance by binding to RNase E (Rne) and regulating its endonucleolytic activity. Can modulate Rne action in a substrate-dependent manner by altering the composition of the degradosome. Modulates RNA-binding and helicase activities of the degradosome. In Haemophilus influenzae (strain 86-028NP), this protein is Regulator of ribonuclease activity A.